The primary structure comprises 149 residues: Large ribosomal subunit protein uL13 (149 aa).

Belongs to the universal ribosomal protein uL13 family. As to quaternary structure, part of the 50S ribosomal subunit.

In terms of biological role, this protein is one of the early assembly proteins of the 50S ribosomal subunit, although it is not seen to bind rRNA by itself. It is important during the early stages of 50S assembly. This is Large ribosomal subunit protein uL13 from Thermosipho africanus (strain TCF52B).